A 223-amino-acid chain; its full sequence is MAGTSLVAGDVVVDALPYFDQGYDAQGVREAAAALVEEETRRYRPTKNYLSYLPTPDYSAFETEIMRNEFERLSSRQPLELLSMKRYELPAPLSGQRNDITAWQECVNNSMAQLEHQAVRIENLELMSQHGCNAWKVYNENLLHMIDCAQKDLQKLRKKIQDLNWQRKNSQLTAGARLREMESTWVSLVSKNYEIERAIVQMENEVYQLKERSGENKENIEDY.

Residues 139-223 (NENLLHMIDC…GENKENIEDY (85 aa)) are a coiled coil.

This sequence belongs to the SPF27 family. In terms of assembly, component of the pre-catalytic and catalytic spliceosome complexes. Component of the postcatalytic spliceosome P complex.

It is found in the nucleus. Required for pre-mRNA splicing as component of the activated spliceosome. May have a scaffolding role in the spliceosome assembly as it contacts all other components of the core complex. The sequence is that of Pre-mRNA-splicing factor SPF27 (bcas2) from Xenopus tropicalis (Western clawed frog).